Reading from the N-terminus, the 169-residue chain is Ferric-chelate reductase (NAD(P)H) (169 aa).

NADP(+) is bound at residue Tyr7. FMN contacts are provided by residues 27 to 31 (QIANT), 45 to 52 (CLNKENDT), 82 to 84 (RKS), and Lys89. Residues His126 and 147–154 (YADYHLMK) each bind NADP(+).

This sequence belongs to the non-flavoprotein flavin reductase family. As to quaternary structure, homodimer. FMN serves as cofactor. The cofactor is FAD.

The enzyme catalyses 2 a Fe(II)-siderophore + NAD(+) + H(+) = 2 a Fe(III)-siderophore + NADH. The catalysed reaction is 2 a Fe(II)-siderophore + NADP(+) + H(+) = 2 a Fe(III)-siderophore + NADPH. In terms of biological role, catalyzes the reduction of bound ferric iron (Fe(3+)) in a variety of iron chelators (siderophores) using NAD(P)H as the electron donor, resulting in the release of Fe(2+). Not active with uncomplexed Fe(3+). Also reduces FMN and FAD, but not riboflavin. This chain is Ferric-chelate reductase (NAD(P)H), found in Archaeoglobus fulgidus (strain ATCC 49558 / DSM 4304 / JCM 9628 / NBRC 100126 / VC-16).